A 218-amino-acid polypeptide reads, in one-letter code: Ras-related protein RABA1h (218 aa).

Residue 20 to 27 participates in GTP binding; sequence GDSGVGKS. An Effector region motif is present at residues 42–50; sequence SRSTIGVEF. GTP contacts are provided by residues 68 to 72, 126 to 129, and 156 to 157; these read DTAGQ, NKAD, and SA. Residues cysteine 215 and cysteine 216 are each lipidated (S-geranylgeranyl cysteine).

The protein belongs to the small GTPase superfamily. Rab family.

It localises to the cell membrane. Functionally, intracellular vesicle trafficking and protein transport. This Arabidopsis thaliana (Mouse-ear cress) protein is Ras-related protein RABA1h (RABA1H).